A 258-amino-acid polypeptide reads, in one-letter code: Putative phosphoenolpyruvate synthase regulatory protein (258 aa).

Gly146–Thr153 contributes to the ADP binding site.

It belongs to the pyruvate, phosphate/water dikinase regulatory protein family. PSRP subfamily.

The enzyme catalyses [pyruvate, water dikinase] + ADP = [pyruvate, water dikinase]-phosphate + AMP + H(+). The catalysed reaction is [pyruvate, water dikinase]-phosphate + phosphate + H(+) = [pyruvate, water dikinase] + diphosphate. Its function is as follows. Bifunctional serine/threonine kinase and phosphorylase involved in the regulation of the phosphoenolpyruvate synthase (PEPS) by catalyzing its phosphorylation/dephosphorylation. This Thiobacillus denitrificans (strain ATCC 25259 / T1) protein is Putative phosphoenolpyruvate synthase regulatory protein.